Consider the following 247-residue polypeptide: PF03932 family protein CutC (247 aa).

It belongs to the CutC family.

The protein localises to the cytoplasm. This Chromobacterium violaceum (strain ATCC 12472 / DSM 30191 / JCM 1249 / CCUG 213 / NBRC 12614 / NCIMB 9131 / NCTC 9757 / MK) protein is PF03932 family protein CutC.